A 404-amino-acid polypeptide reads, in one-letter code: Glucose-1-phosphate adenylyltransferase (404 aa).

Alpha-D-glucose 1-phosphate-binding positions include Y99, G164, 179–180 (EK), and S197.

Belongs to the bacterial/plant glucose-1-phosphate adenylyltransferase family.

The enzyme catalyses alpha-D-glucose 1-phosphate + ATP + H(+) = ADP-alpha-D-glucose + diphosphate. It functions in the pathway capsule biogenesis; capsule polysaccharide biosynthesis. It participates in glycan biosynthesis; glycogen biosynthesis. Involved in the biosynthesis of ADP-glucose, a building block, required in the biosynthesis of maltose-1-phosphate (M1P) and in the elongation reactions to produce linear alpha-1,4-glucans. Catalyzes the reaction between ATP and alpha-D-glucose 1-phosphate (G1P) to produce pyrophosphate and ADP-Glc. This Mycobacteroides abscessus (strain ATCC 19977 / DSM 44196 / CCUG 20993 / CIP 104536 / JCM 13569 / NCTC 13031 / TMC 1543 / L948) (Mycobacterium abscessus) protein is Glucose-1-phosphate adenylyltransferase.